A 363-amino-acid polypeptide reads, in one-letter code: Aminomethyltransferase (363 aa).

This sequence belongs to the GcvT family. The glycine cleavage system is composed of four proteins: P, T, L and H.

It carries out the reaction N(6)-[(R)-S(8)-aminomethyldihydrolipoyl]-L-lysyl-[protein] + (6S)-5,6,7,8-tetrahydrofolate = N(6)-[(R)-dihydrolipoyl]-L-lysyl-[protein] + (6R)-5,10-methylene-5,6,7,8-tetrahydrofolate + NH4(+). In terms of biological role, the glycine cleavage system catalyzes the degradation of glycine. The sequence is that of Aminomethyltransferase from Saccharophagus degradans (strain 2-40 / ATCC 43961 / DSM 17024).